The following is a 469-amino-acid chain: Protein RUFY3 (469 aa).

2 positions are modified to phosphothreonine: threonine 5 and threonine 12. A phosphoserine mark is found at tyrosine 27, serine 34, and serine 49. At threonine 51 the chain carries Phosphothreonine. Aspartate 53 carries the phosphoserine modification. The region spanning aspartate 95–glutamate 227 is the RUN domain. Coiled coils occupy residues asparagine 271–glutamate 362 and lysine 422–lysine 463. Residues serine 321–alanine 337 are compositionally biased toward basic and acidic residues. The segment at serine 321–leucine 342 is disordered.

Interacts with PAK1. Interacts (via C-terminus) with Ras-related Rab-5 proteins. Interacts (via C-terminus) with Ras-related Rap-2 proteins. Interacts with PIK3CA and PIK3R1. Interacts (via N-terminus) with FSCN1; this interaction induces neuron axon development. Interacts with DBN1. Interacts (via the second coiled coil) with GTP-, but not GDP-bound ARL8A and ARL8B. Interacts with dynactin/DCTN1 and the dynein intermediate chain DYNC1I1/2. Directly interacts with DYNC1LI1. Post-translationally, phosphorylated by PAK1. Isoform 1 is partially phosphorylated. As to expression, expressed in brain (at protein level).

Its subcellular location is the cytoplasm. The protein localises to the endomembrane system. It is found in the cell projection. The protein resides in the invadopodium. It localises to the growth cone. Its subcellular location is the perikaryon. The protein localises to the filopodium. It is found in the lamellipodium. The protein resides in the lysosome. Functionally, ARL8 effector that promotes the coupling of endolysosomes to dynein-dynactin for retrograde transport along microtubules. Acts by binding both GTP-bound ARL8 and dynein-dynactin. In nonneuronal cells, promotes concentration of endolysosomes in the juxtanuclear area. In hippocampal neurons, drives retrograde transport of endolysosomes from the axon to the soma. Plays a role in the generation of neuronal polarity formation and axon growth. Implicated in the formation of a single axon by developing neurons. May inhibit the formation of additional axons by inhibition of PI3K in minor neuronal processes. Plays a role in the formation of F-actin-enriched protrusive structures at the cell periphery. Plays a role in cytoskeletal organization by regulating the subcellular localization of FSCN1 and DBN1 at axonal growth cones. The sequence is that of Protein RUFY3 from Mus musculus (Mouse).